The following is an 802-amino-acid chain: MLVSYNWVKEFFQDFPLTAEELGEAITRTGIEIEGVEELSASLKNVVVGEVLSCERHPDAEKLNKCLVQTDEAEPVQIICGAPNVAAGQKVIVAKVGARLPGGLKIKRAKLRGEVSEGMICSLAELGFESKVVPKAYAEGIYVLPAHVETGVNAITLLGLDDAILDMAITPNRADALSMKGVAHEVGAIIHQKPAQPTEPDVSEKGKAEDFISVEVENPAETPYYAIKMVENIEIKESPLWLQTKLMKAGIRPHNNVVDVTNYINLLYGQPLHSFDYDKIGSKKIVVRSAKEQEEITTLDGEKRTLQAGHTVITNGVEPIAIAGVMGGEFSEVTENTTTVALEGAIFSSSSIGKASRELYLRTEASIRYDKGSDAWKVEKALAHGGALIAELSGGTLVGGVVEVDNREKAVNKIETSLTRINRILGTAITLTEIETIFDRLGFVLEVKNDALIIEVPTRRWDITIEADILEEVARIYGYDEIPVTLPATSTTGGLSDSQKARRVMRAYLEGAGLNQALTYSLTSKKDATRLALSDEKTVALSMPMSEEHSHLRTSIVPQLIRSASYNIARKNMDVALYEMGTVFYATEGDNLPIEQEHLAGLITGNWHIADWQKTPKPVDFFVLKGIVEGLVNKLGIKSELHWKQTEKEELHPGRTASLVLEGQEIGYLGALHPAVEANYDLKETYVFEINVAALLDATKEKVVYHPIPRYPEMTRDLALLVDKDTNHAAISQVIKEHGGKLLVDIELFDIFEGESLGENKKSLAYTLTFLDSERTLVEEDVQKATNKVVEALQEKLNAIIR.

A tRNA-binding domain is found at 40–155 (SASLKNVVVG…AHVETGVNAI (116 aa)). Positions 409–484 (KAVNKIETSL…RIYGYDEIPV (76 aa)) constitute a B5 domain. 4 residues coordinate Mg(2+): Asp-462, Asp-468, Glu-471, and Glu-472. In terms of domain architecture, FDX-ACB spans 709–802 (PRYPEMTRDL…LQEKLNAIIR (94 aa)).

Belongs to the phenylalanyl-tRNA synthetase beta subunit family. Type 1 subfamily. In terms of assembly, tetramer of two alpha and two beta subunits. It depends on Mg(2+) as a cofactor.

The protein localises to the cytoplasm. It catalyses the reaction tRNA(Phe) + L-phenylalanine + ATP = L-phenylalanyl-tRNA(Phe) + AMP + diphosphate + H(+). The polypeptide is Phenylalanine--tRNA ligase beta subunit (Listeria monocytogenes serovar 1/2a (strain ATCC BAA-679 / EGD-e)).